Consider the following 140-residue polypeptide: Nucleoside diphosphate kinase (140 aa).

ATP-binding residues include lysine 11, phenylalanine 59, arginine 87, threonine 93, arginine 104, and asparagine 114. Histidine 117 acts as the Pros-phosphohistidine intermediate in catalysis.

Belongs to the NDK family. In terms of assembly, homotetramer. Mg(2+) serves as cofactor.

It is found in the cytoplasm. It carries out the reaction a 2'-deoxyribonucleoside 5'-diphosphate + ATP = a 2'-deoxyribonucleoside 5'-triphosphate + ADP. The enzyme catalyses a ribonucleoside 5'-diphosphate + ATP = a ribonucleoside 5'-triphosphate + ADP. Major role in the synthesis of nucleoside triphosphates other than ATP. The ATP gamma phosphate is transferred to the NDP beta phosphate via a ping-pong mechanism, using a phosphorylated active-site intermediate. In Francisella tularensis subsp. tularensis (strain SCHU S4 / Schu 4), this protein is Nucleoside diphosphate kinase.